Consider the following 213-residue polypeptide: Probable septum site-determining protein MinC (213 aa).

The protein belongs to the MinC family. Interacts with MinD and FtsZ.

In terms of biological role, cell division inhibitor that blocks the formation of polar Z ring septums. Rapidly oscillates between the poles of the cell to destabilize FtsZ filaments that have formed before they mature into polar Z rings. Prevents FtsZ polymerization. This is Probable septum site-determining protein MinC from Clostridium botulinum (strain Eklund 17B / Type B).